Reading from the N-terminus, the 419-residue chain is Histidine--tRNA ligase (419 aa).

The protein belongs to the class-II aminoacyl-tRNA synthetase family. Homodimer.

It is found in the cytoplasm. It carries out the reaction tRNA(His) + L-histidine + ATP = L-histidyl-tRNA(His) + AMP + diphosphate + H(+). This chain is Histidine--tRNA ligase, found in Halothermothrix orenii (strain H 168 / OCM 544 / DSM 9562).